The chain runs to 281 residues: Pantothenate synthetase (281 aa).

Residue 31–38 (MGALHDGH) participates in ATP binding. Catalysis depends on His-38, which acts as the Proton donor. Position 62 (Gln-62) interacts with (R)-pantoate. Gln-62 is a binding site for beta-alanine. An ATP-binding site is contributed by 148 to 151 (GQKD). Position 154 (Gln-154) interacts with (R)-pantoate. ATP is bound by residues Val-177 and 185–188 (LSSR).

The protein belongs to the pantothenate synthetase family. As to quaternary structure, homodimer.

The protein localises to the cytoplasm. The catalysed reaction is (R)-pantoate + beta-alanine + ATP = (R)-pantothenate + AMP + diphosphate + H(+). It participates in cofactor biosynthesis; (R)-pantothenate biosynthesis; (R)-pantothenate from (R)-pantoate and beta-alanine: step 1/1. Functionally, catalyzes the condensation of pantoate with beta-alanine in an ATP-dependent reaction via a pantoyl-adenylate intermediate. This is Pantothenate synthetase from Dinoroseobacter shibae (strain DSM 16493 / NCIMB 14021 / DFL 12).